A 626-amino-acid polypeptide reads, in one-letter code: Division abnormally delayed protein (626 aa).

The signal sequence occupies residues 1-26; it reads MAARSVRLAQLLLFTLLCGFVGLSAA. Residues 41-52 are compositionally biased toward basic residues; that stretch reads LHSATTHHRRRL. Positions 41-65 are disordered; that stretch reads LHSATTHHRRRLQRDSRAKDAVGGS. The N-linked (GlcNAc...) asparagine; atypical glycan is linked to Asn-97. N-linked (GlcNAc...) asparagine glycosylation is found at Asn-101, Asn-150, and Asn-187. Residues 533-607 form a disordered region; that stretch reads NSIQATHDIQ…GKTSGSNPLE (75 aa). 4 O-linked (Xyl...) (heparan sulfate) serine glycosylation sites follow: Ser-549, Ser-569, Ser-573, and Ser-601. The span at 565–575 shows a compositional bias: gly residues; that stretch reads GAHGSGDGSGD. Gly-602 carries the GPI-anchor amidated glycine lipid modification. The propeptide at 603-626 is removed in mature form; it reads SNPLEGTATWMLLTLVTMLFSSCS.

The protein belongs to the glypican family. Interacts with nord; the interaction promotes dally degradation. Interacts with Magu. As part of the dally/ Magu complex, associates with fwe (isoforms ubi, LoseA and LoseB) and is unable to interact with fwe independently of Magu.

Its subcellular location is the cell membrane. In terms of biological role, cell surface proteoglycan that bears heparan sulfate. Functions as a coreceptor for growth factors and morphogens, such as the products of dpp, to regulate signaling and distribution of these ligands. Required for cell division patterning during postembryonic development of the nervous system. Plays a role in dpp/BMP signaling possibly by stabilizing dpp and thereby creating a morphological gradient during wing development. Might have a role in testis development. Functions with magu and fwe in a mechanism of scaling, which utilises apoptosis to ensure that the dpp patterning gradient remains proportional to the size of the growing wing. In this mechanism, fwe represses dally and Magu-dependent activity in expanding the gradient, and dally/Magu inhibits fwe-dependent apoptosis to keep cell death rate low. When the levels of these different proteins are optimally regulated the gradient correctly scales with organ growth but when this fails, fwe-mediated apoptosis is activated to trim the developing tissue to match the correct size of the gradient. The sequence is that of Division abnormally delayed protein (dally) from Drosophila melanogaster (Fruit fly).